The sequence spans 129 residues: Transcriptional activator protein (129 aa).

A Nuclear localization signal motif is present at residues 13–28; it reads KAQHKIAKRRAVRRRR. Residues 33 to 50 fold into a zinc finger; it reads CGCSIFLHINCADNGFTH. The interval 73-109 is disordered; sequence IFQDTTRRGPVVHQNQDLPHPSPVQPQPTESIGSPQS. Ser-109 carries the phosphoserine; by host modification. Residues 115-129 are transactivation; it reads SLDDFDESFWADIFK.

This sequence belongs to the geminiviridae transcriptional activator protein family. In terms of assembly, monomer. Homodimer. Homooligomer. Self-interaction correlates with nuclear localization and efficient activation of transcription. Monomers suppress local silencing by interacting with and inactivating host adenosine kinase 2 (ADK2) in the cytoplasm. Interacts with and inhibits host SNF1 kinase. Binds to ssDNA. Phosphorylated at Ser-109 by A.thaliana KIN10.

The protein resides in the host nucleus. The protein localises to the host cytoplasm. Functionally, strong activator of the late viral genes promoters. Enhances the expression of the capsid protein and nuclear shuttle protein. Acts as a suppressor of RNA-mediated gene silencing, also known as post-transcriptional gene silencing (PTGS), a mechanism of plant viral defense that limits the accumulation of viral RNAs. Suppresses the host RNA silencing by inhibiting adenosine kinase 2 (ADK2), a kinase involved in a general methylation pathway. Also suppresses the host basal defense by interacting with and inhibiting SNF1 kinase, a key regulator of cell metabolism implicated in innate antiviral defense. Determines pathogenicity. In Cabbage leaf curl virus (isolate Jamaica) (CaLCuV), this protein is Transcriptional activator protein.